The following is a 569-amino-acid chain: Proline--tRNA ligase (569 aa).

The protein belongs to the class-II aminoacyl-tRNA synthetase family. ProS type 1 subfamily. In terms of assembly, homodimer.

It localises to the cytoplasm. The enzyme catalyses tRNA(Pro) + L-proline + ATP = L-prolyl-tRNA(Pro) + AMP + diphosphate. Catalyzes the attachment of proline to tRNA(Pro) in a two-step reaction: proline is first activated by ATP to form Pro-AMP and then transferred to the acceptor end of tRNA(Pro). As ProRS can inadvertently accommodate and process non-cognate amino acids such as alanine and cysteine, to avoid such errors it has two additional distinct editing activities against alanine. One activity is designated as 'pretransfer' editing and involves the tRNA(Pro)-independent hydrolysis of activated Ala-AMP. The other activity is designated 'posttransfer' editing and involves deacylation of mischarged Ala-tRNA(Pro). The misacylated Cys-tRNA(Pro) is not edited by ProRS. This chain is Proline--tRNA ligase, found in Levilactobacillus brevis (strain ATCC 367 / BCRC 12310 / CIP 105137 / JCM 1170 / LMG 11437 / NCIMB 947 / NCTC 947) (Lactobacillus brevis).